The chain runs to 491 residues: Putative diacyglycerol O-acyltransferase MT2557 (491 aa).

His145 acts as the Proton acceptor in catalysis.

This sequence belongs to the long-chain O-acyltransferase family.

It carries out the reaction an acyl-CoA + a 1,2-diacyl-sn-glycerol = a triacyl-sn-glycerol + CoA. It participates in glycerolipid metabolism; triacylglycerol biosynthesis. This chain is Putative diacyglycerol O-acyltransferase MT2557, found in Mycobacterium tuberculosis (strain CDC 1551 / Oshkosh).